The following is a 417-amino-acid chain: MFSKHDQIRGYDDELLAAMDAEEARQEDHLELIASENYTSKRVMQAQGSGLTNKYAEGYPGKRYYGGCEHVDKVERLAIDRARQLFGADYANVQPHSGSSANAAVYLALLNAGDTILGMSLAHGGHLTHGAKVSSSGKLYNAVQYGLDTATGLIDYDEVERLAVEHKPKMIVAGFSAYSKTLDFPRFRAIADKVGALLFVDMAHVAGLVAAGLYPNPIPFADVVTTTTHKTLRGPRGGLILARANEEIEKKLNSAVFPGAQGGPLMHVIAAKAVCFKEALEPGFKDYQAQVIRNAKAMAEVFIGRGYDVVSGGTDNHLMLISLVRQGLTGKEADAALGRVGITVNKNAVPNDPQSPFVTSGIRIGTPAITTRGLQEAQSRELAGWICDILDHLGDADVEAKVATQVAGLCADFPVYR.

(6S)-5,6,7,8-tetrahydrofolate-binding positions include Leu121 and 125–127 (GHL). The residue at position 230 (Lys230) is an N6-(pyridoxal phosphate)lysine. A (6S)-5,6,7,8-tetrahydrofolate-binding site is contributed by 355-357 (SPF).

The protein belongs to the SHMT family. In terms of assembly, homodimer. It depends on pyridoxal 5'-phosphate as a cofactor.

The protein resides in the cytoplasm. The enzyme catalyses (6R)-5,10-methylene-5,6,7,8-tetrahydrofolate + glycine + H2O = (6S)-5,6,7,8-tetrahydrofolate + L-serine. It participates in one-carbon metabolism; tetrahydrofolate interconversion. Its pathway is amino-acid biosynthesis; glycine biosynthesis; glycine from L-serine: step 1/1. In terms of biological role, catalyzes the reversible interconversion of serine and glycine with tetrahydrofolate (THF) serving as the one-carbon carrier. This reaction serves as the major source of one-carbon groups required for the biosynthesis of purines, thymidylate, methionine, and other important biomolecules. Also exhibits THF-independent aldolase activity toward beta-hydroxyamino acids, producing glycine and aldehydes, via a retro-aldol mechanism. This is Serine hydroxymethyltransferase 1 from Pseudomonas aeruginosa (strain ATCC 15692 / DSM 22644 / CIP 104116 / JCM 14847 / LMG 12228 / 1C / PRS 101 / PAO1).